Reading from the N-terminus, the 416-residue chain is Isocitrate dehydrogenase [NADP] (416 aa).

NADP(+)-binding positions include 77–79 (TIT) and Arg-84. Thr-79 contacts substrate. Residues 96-102 (SPNGTIR), Arg-111, and Arg-134 contribute to the substrate site. Asp-254 provides a ligand contact to Mn(2+). An NADP(+)-binding site is contributed by Lys-262. A Mn(2+)-binding site is contributed by Asp-277. Residues 312–317 (GTVTRH) and Asn-330 each bind NADP(+).

The protein belongs to the isocitrate and isopropylmalate dehydrogenases family. As to quaternary structure, heterodimer. Mg(2+) serves as cofactor. It depends on Mn(2+) as a cofactor.

It is found in the cytoplasm. It carries out the reaction D-threo-isocitrate + NADP(+) = 2-oxoglutarate + CO2 + NADPH. May supply 2-oxoglutarate for amino acid biosynthesis and ammonia assimilation via the glutamine synthetase/glutamate synthase (GS/GOGAT) pathway. This chain is Isocitrate dehydrogenase [NADP] (ICDH-1), found in Solanum tuberosum (Potato).